The following is a 211-amino-acid chain: ATP-dependent Clp protease proteolytic subunit (211 aa).

The active-site Nucleophile is the Ser114. His139 is an active-site residue.

This sequence belongs to the peptidase S14 family. As to quaternary structure, fourteen ClpP subunits assemble into 2 heptameric rings which stack back to back to give a disk-like structure with a central cavity, resembling the structure of eukaryotic proteasomes.

The protein resides in the cytoplasm. It catalyses the reaction Hydrolysis of proteins to small peptides in the presence of ATP and magnesium. alpha-casein is the usual test substrate. In the absence of ATP, only oligopeptides shorter than five residues are hydrolyzed (such as succinyl-Leu-Tyr-|-NHMec, and Leu-Tyr-Leu-|-Tyr-Trp, in which cleavage of the -Tyr-|-Leu- and -Tyr-|-Trp bonds also occurs).. Functionally, cleaves peptides in various proteins in a process that requires ATP hydrolysis. Has a chymotrypsin-like activity. Plays a major role in the degradation of misfolded proteins. The sequence is that of ATP-dependent Clp protease proteolytic subunit from Pseudomonas fluorescens (strain Pf0-1).